Here is a 198-residue protein sequence, read N- to C-terminus: NADH-quinone oxidoreductase subunit B 1 (198 aa).

[4Fe-4S] cluster contacts are provided by Cys-77, Cys-78, Cys-142, and Cys-172.

This sequence belongs to the complex I 20 kDa subunit family. In terms of assembly, NDH-1 is composed of 14 different subunits. Subunits NuoB, C, D, E, F, and G constitute the peripheral sector of the complex. It depends on [4Fe-4S] cluster as a cofactor.

It localises to the cell inner membrane. It catalyses the reaction a quinone + NADH + 5 H(+)(in) = a quinol + NAD(+) + 4 H(+)(out). NDH-1 shuttles electrons from NADH, via FMN and iron-sulfur (Fe-S) centers, to quinones in the respiratory chain. The immediate electron acceptor for the enzyme in this species is believed to be ubiquinone. Couples the redox reaction to proton translocation (for every two electrons transferred, four hydrogen ions are translocated across the cytoplasmic membrane), and thus conserves the redox energy in a proton gradient. This Rhodopseudomonas palustris (strain ATCC BAA-98 / CGA009) protein is NADH-quinone oxidoreductase subunit B 1.